A 308-amino-acid polypeptide reads, in one-letter code: NADH-cytochrome b5 reductase 1 (308 aa).

A helical transmembrane segment spans residues I10–I27. Positions T59–T164 constitute an FAD-binding FR-type domain. FAD contacts are provided by residues T144 to G159 and H170 to L207.

This sequence belongs to the flavoprotein pyridine nucleotide cytochrome reductase family. As to quaternary structure, monomer. Component of the 2-(3-amino-3-carboxypropyl)histidine synthase complex composed of DPH1, DPH2, DPH3 and a NADH-dependent reductase, predominantly CBR1. FAD serves as cofactor.

Its subcellular location is the mitochondrion outer membrane. It catalyses the reaction 2 Fe(III)-[cytochrome b5] + NADH = 2 Fe(II)-[cytochrome b5] + NAD(+) + H(+). It carries out the reaction 2 Fe(3+)-[Dph3] + NADH = 2 Fe(2+)-[Dph3] + NAD(+) + H(+). Its pathway is protein modification; peptidyl-diphthamide biosynthesis. In terms of biological role, NADH-dependent reductase for DPH3 and cytochrome b5. Required for the first step of diphthamide biosynthesis, a post-translational modification of histidine which occurs in elongation factor 2. DPH1 and DPH2 transfer a 3-amino-3-carboxypropyl (ACP) group from S-adenosyl-L-methionine (SAM) to a histidine residue, the reaction is assisted by a reduction system comprising DPH3 and a NADH-dependent reductase, predominantly CBR1. By reducing DPH3, also involved in the formation of the tRNA wobble base modification mcm5s 2U (5-methoxycarbonylmethyl-2-thiouridine), mediated by the elongator complex. The cytochrome b5/NADH cytochrome b5 reductase electron transfer system supports the catalytic activity of several sterol biosynthetic enzymes. The chain is NADH-cytochrome b5 reductase 1 (CBR1) from Coccidioides immitis (strain RS) (Valley fever fungus).